The following is a 458-amino-acid chain: Bifunctional protein HldE (458 aa).

The segment at 1-311 (MVNVLVVGDL…ENLKSKKSGF (311 aa)) is ribokinase. 189 to 192 (NKKE) is a binding site for ATP. Residue D257 is part of the active site. The interval 333 to 458 (FTNGCFDILH…TTNIINKIKG (126 aa)) is cytidylyltransferase.

In the N-terminal section; belongs to the carbohydrate kinase PfkB family. It in the C-terminal section; belongs to the cytidylyltransferase family. In terms of assembly, homodimer.

It catalyses the reaction D-glycero-beta-D-manno-heptose 7-phosphate + ATP = D-glycero-beta-D-manno-heptose 1,7-bisphosphate + ADP + H(+). The enzyme catalyses D-glycero-beta-D-manno-heptose 1-phosphate + ATP + H(+) = ADP-D-glycero-beta-D-manno-heptose + diphosphate. It participates in nucleotide-sugar biosynthesis; ADP-L-glycero-beta-D-manno-heptose biosynthesis; ADP-L-glycero-beta-D-manno-heptose from D-glycero-beta-D-manno-heptose 7-phosphate: step 1/4. Its pathway is nucleotide-sugar biosynthesis; ADP-L-glycero-beta-D-manno-heptose biosynthesis; ADP-L-glycero-beta-D-manno-heptose from D-glycero-beta-D-manno-heptose 7-phosphate: step 3/4. Functionally, catalyzes the phosphorylation of D-glycero-D-manno-heptose 7-phosphate at the C-1 position to selectively form D-glycero-beta-D-manno-heptose-1,7-bisphosphate. Catalyzes the ADP transfer from ATP to D-glycero-beta-D-manno-heptose 1-phosphate, yielding ADP-D-glycero-beta-D-manno-heptose. The protein is Bifunctional protein HldE of Campylobacter fetus subsp. fetus (strain 82-40).